Consider the following 137-residue polypeptide: SPbeta prophage-derived disulfide bond formation protein A (137 aa).

The first 25 residues, 1 to 25, serve as a signal peptide directing secretion; it reads MKKWIVLFLVLIAAAISIFVYVSTG. Residues 26–136 form the Thioredoxin domain; that stretch reads SEKPFYNDIN…IEKFFDKNGD (111 aa). Cysteine 58 and cysteine 61 are disulfide-bonded.

Belongs to the thioredoxin family.

It localises to the secreted. Functionally, unknown; dispensable for production of the lantibiotic sublancin 168 and for competence for DNA uptake. The sequence is that of SPbeta prophage-derived disulfide bond formation protein A (bdbA) from Bacillus subtilis (strain 168).